Consider the following 350-residue polypeptide: ATP-dependent (S)-NAD(P)H-hydrate dehydratase (350 aa).

The YjeF C-terminal domain maps to 35–342 (LMQSVKRIIP…PEVGRAYEEL (308 aa)). Residues G139 and 192 to 198 (NVAEFGR) each bind (6S)-NADPHX. Residues 230–234 (KGPVD) and 249–258 (GGLKRCGGQG) each bind ATP. D259 contacts (6S)-NADPHX.

Belongs to the NnrD/CARKD family. Requires Mg(2+) as cofactor.

The protein localises to the cytoplasm. The enzyme catalyses (6S)-NADHX + ATP = ADP + phosphate + NADH + H(+). The catalysed reaction is (6S)-NADPHX + ATP = ADP + phosphate + NADPH + H(+). Catalyzes the dehydration of the S-form of NAD(P)HX at the expense of ATP, which is converted to ADP. Together with NAD(P)HX epimerase, which catalyzes the epimerization of the S- and R-forms, the enzyme allows the repair of both epimers of NAD(P)HX, a damaged form of NAD(P)H that is a result of enzymatic or heat-dependent hydration. This chain is ATP-dependent (S)-NAD(P)H-hydrate dehydratase, found in Mycosarcoma maydis (Corn smut fungus).